We begin with the raw amino-acid sequence, 389 residues long: Homoserine O-acetyltransferase (389 aa).

Positions 63-371 (NAVLVLHALT…SSDYGHDGFL (309 aa)) constitute an AB hydrolase-1 domain. S168 acts as the Nucleophile in catalysis. Position 240 (R240) interacts with substrate. Residues D334 and H367 contribute to the active site. Position 368 (D368) interacts with substrate.

Belongs to the AB hydrolase superfamily. MetX family. As to quaternary structure, homodimer.

The protein localises to the cytoplasm. It catalyses the reaction L-homoserine + acetyl-CoA = O-acetyl-L-homoserine + CoA. It participates in amino-acid biosynthesis; L-methionine biosynthesis via de novo pathway; O-acetyl-L-homoserine from L-homoserine: step 1/1. Transfers an acetyl group from acetyl-CoA to L-homoserine, forming acetyl-L-homoserine. In Clavibacter michiganensis subsp. michiganensis (strain NCPPB 382), this protein is Homoserine O-acetyltransferase.